A 379-amino-acid polypeptide reads, in one-letter code: Elongation factor Ts, mitochondrial (379 aa).

Residues M1–T33 constitute a mitochondrion transit peptide.

This sequence belongs to the EF-Ts family.

The protein resides in the mitochondrion. Associates with the EF-Tu.GDP complex and induces the exchange of GDP to GTP. It remains bound to the aminoacyl-tRNA.EF-Tu.GTP complex up to the GTP hydrolysis stage on the ribosome. The polypeptide is Elongation factor Ts, mitochondrial (Zea mays (Maize)).